The following is a 314-amino-acid chain: Pathogenicity locus probable regulatory protein HrpR (314 aa).

The region spanning Thr11–Pro239 is the Sigma-54 factor interaction domain. Residues Gly39 to Asp46 and Ser101 to Glu110 each bind ATP. The H-T-H motif DNA-binding region spans Phe281–Lys300.

Member of the two-component regulatory system HrpR/HrpS that regulates the activation of the sigma factor hrpL which itself induces the expression of hprD as well as other hrp loci which are involved in plant pathogenicity, hrmA and avr genes. Probably interacts with sigma-54. This Pseudomonas syringae pv. syringae protein is Pathogenicity locus probable regulatory protein HrpR (hrpR).